The sequence spans 423 residues: Protein IQ-DOMAIN 16 (423 aa).

IQ domains are found at residues 99-127 (RHWA…GIVK) and 128-150 (LQAL…CIKA). The stretch at 231–251 (QKKLEIAIKREKAQALALSNQ) forms a coiled coil. The interval 235-252 (EIAIKREKAQALALSNQI) is calmodulin-binding.

It belongs to the IQD family. As to quaternary structure, binds to multiple calmodulin (CaM) in the presence of Ca(2+) and CaM-like proteins.

The protein resides in the cytoplasm. The protein localises to the cytoskeleton. Its subcellular location is the cell membrane. Functionally, may be involved in cooperative interactions with calmodulins or calmodulin-like proteins. Recruits calmodulin proteins to microtubules, thus being a potential scaffold in cellular signaling and trafficking. Regulates cell shape and elongation in aerial organs (i.e. cotyledons, leaves, and hypocotyls) probably by regulating cortical microtubules (MT) arrays orientation. May associate with nucleic acids and regulate gene expression at the transcriptional or post-transcriptional level. This Arabidopsis thaliana (Mouse-ear cress) protein is Protein IQ-DOMAIN 16.